The following is a 337-amino-acid chain: Neurogenic differentiation factor 6 (337 aa).

Positions 43 to 82 (LRGKSIKRAPGEETEKEEEEEDREEEDENGLPRRRGLRKK) are disordered. Positions 54-71 (EETEKEEEEEDREEEDEN) are enriched in acidic residues. Positions 80–86 (RKKKTTK) match the Nuclear localization signal motif. The 53-residue stretch at 94–146 (FRRQEANARERNRMHGLNDALDNLRKVVPCYSKTQKLSKIETLRLAKNYIWAL) folds into the bHLH domain.

Efficient DNA binding requires dimerization with another bHLH protein.

The protein localises to the nucleus. Its function is as follows. Activates E box-dependent transcription in collaboration with TCF3/E47. May be a trans-acting factor involved in the development and maintenance of the mammalian nervous system. Transactivates the promoter of its own gene. This is Neurogenic differentiation factor 6 (NEUROD6) from Homo sapiens (Human).